Consider the following 152-residue polypeptide: Stigma-specific STIG1-like protein 1 (152 aa).

Residues 1–19 (MAFVKLLVSIAITTAITIA) form the signal peptide.

It belongs to the STIG1 family.

The polypeptide is Stigma-specific STIG1-like protein 1 (Arabidopsis thaliana (Mouse-ear cress)).